The chain runs to 249 residues: Ubiquinone biosynthesis O-methyltransferase (249 aa).

Positions 41, 72, 93, and 136 each coordinate S-adenosyl-L-methionine.

The protein belongs to the methyltransferase superfamily. UbiG/COQ3 family.

The enzyme catalyses a 3-demethylubiquinol + S-adenosyl-L-methionine = a ubiquinol + S-adenosyl-L-homocysteine + H(+). The catalysed reaction is a 3-(all-trans-polyprenyl)benzene-1,2-diol + S-adenosyl-L-methionine = a 2-methoxy-6-(all-trans-polyprenyl)phenol + S-adenosyl-L-homocysteine + H(+). It participates in cofactor biosynthesis; ubiquinone biosynthesis. In terms of biological role, O-methyltransferase that catalyzes the 2 O-methylation steps in the ubiquinone biosynthetic pathway. This chain is Ubiquinone biosynthesis O-methyltransferase, found in Methylobacterium sp. (strain 4-46).